The following is a 771-amino-acid chain: MSGFFTSLDPRRVQWGAAWYAMHSRILRTKPVESMLEGTGTTTAHGTKLAQVLTTVDLISLGVGSCVGTGMYVVSGLVAKEMAGPGVIVSFIIAAVASILSGVCYAEFGVRVPKTTGSAYTYSYVTVGEFVAFFIGWNLILEYLIGTAAGASALSSMFDSLANHTISRWMADSVGTLNGLGKGEESYPDLLALLIAVIVTIIVALGVKNSIGFNNVLNVLNLAVWVFIMIAGLFFINGKYWAEGQFLPHGWSGVLQGAATCFYAFIGFDIIATTGEEAKNPNTSIPYAITASLVICLTAYVSVSVILTLMVPYYTIDTESPLMEMFVAHGFYAAKFVVAIGSVAGLTVSLLGSLFPMPRVIYAMAGDGLLFRFLAHVSSYTETPVVACIVSGFLAALLALLVSLRDLIEMMSIGTLLAYTLVSVCVLLLRYQPESDIDGFVKFLSEEHTKKKEGILADCEKEACSPVSEGDEFSGPATNTCGAKNLPSLGDNEMLIGKSDKSTYNVNHPNYGTVDMTTGIEADESENIYLIKLKKLIGPHYYTMRIRLGLPGKMDRPTAATGHTVTICVLLLFILMFIFCSFIIFGSDYISEQSWWAILLVVLMVLLISTLVFVILQQPENPKKLPYMAPCLPFVPAFAMLVNIYLMLKLSTITWIRFAVWCFVGLLIYFGYGIWNSTLEISAREEALHQSTYQRYDVDDPFSVEEGFSYATEGESQEDWGGPTEDKGFYYQQMSDAKANGRTSSKAKSKSKHKQNSEALIANDELDYSPE.

Helical transmembrane passes span 58-78 (LISL…SGLV), 83-103 (AGPG…LSGV), 119-141 (AYTY…NLIL), 187-207 (YPDL…ALGV), 216-236 (VLNV…LFFI), and 251-271 (WSGV…FDII). An N-linked (GlcNAc...) asparagine glycan is attached at asparagine 282. 5 consecutive transmembrane segments (helical) span residues 291-311 (ASLV…TLMV), 336-356 (FVVA…SLFP), 360-380 (VIYA…VSSY), 384-404 (PVVA…LVSL), and 407-427 (LIEM…VCVL). Serine 465, serine 468, and serine 488 each carry phosphoserine. The next 4 helical transmembrane spans lie at 565–585 (VTIC…FIIF), 596–616 (WAIL…FVIL), 628–648 (MAPC…YLML), and 655–675 (WIRF…YGIW). N-linked (GlcNAc...) asparagine glycosylation occurs at asparagine 676. The segment at 736-771 (DAKANGRTSSKAKSKSKHKQNSEALIANDELDYSPE) is disordered. Residues 745 to 754 (SKAKSKSKHK) show a composition bias toward basic residues. 2 positions are modified to phosphoserine: serine 757 and serine 769.

This sequence belongs to the amino acid-polyamine-organocation (APC) superfamily. Cationic amino acid transporter (CAT) (TC 2.A.3.3) family. As to expression, expressed in skin fibroblasts.

Its subcellular location is the lysosome membrane. It catalyses the reaction 4-aminobutanoate(in) = 4-aminobutanoate(out). In terms of biological role, imports 4-aminobutanoate (GABA) into lysosomes. May act as a GABA sensor that regulates mTORC2-dependent INS signaling and gluconeogenesis. The transport mechanism and substrate selectivity remain to be elucidated. In Homo sapiens (Human), this protein is Solute carrier family 7 member 14.